The sequence spans 231 residues: Orotidine 5'-phosphate decarboxylase (231 aa).

Substrate contacts are provided by residues aspartate 12, lysine 34, 61 to 70, threonine 120, arginine 181, glutamine 190, glycine 210, and arginine 211; that span reads DLKFHDIPNT. Catalysis depends on lysine 63, which acts as the Proton donor.

The protein belongs to the OMP decarboxylase family. Type 1 subfamily. As to quaternary structure, homodimer.

It carries out the reaction orotidine 5'-phosphate + H(+) = UMP + CO2. Its pathway is pyrimidine metabolism; UMP biosynthesis via de novo pathway; UMP from orotate: step 2/2. Catalyzes the decarboxylation of orotidine 5'-monophosphate (OMP) to uridine 5'-monophosphate (UMP). This is Orotidine 5'-phosphate decarboxylase from Alcanivorax borkumensis (strain ATCC 700651 / DSM 11573 / NCIMB 13689 / SK2).